The primary structure comprises 261 residues: ATP synthase subunit a (261 aa).

Transmembrane regions (helical) follow at residues 30-50 (VLFTNSALWMVVAAITLGLFM), 63-83 (WQVAVEGFTGFISSMMMANIG), 96-116 (LFMFILFCNLLGMLPLGVLGL), 125-145 (IAITGVLALISFAIVLVVGFW), 151-171 (FFSLFVPHGTPLPMIPIIAPI), 187-207 (LFVAMTAGHVLLKVLSGFVIN), 214-234 (LWLGSIVSVLSFTLMIGISAL), and 235-255 (ELLVAGIQAYVFALLTSLYIN).

Belongs to the ATPase A chain family. F-type ATPases have 2 components, CF(1) - the catalytic core - and CF(0) - the membrane proton channel. CF(1) has five subunits: alpha(3), beta(3), gamma(1), delta(1), epsilon(1). CF(0) has three main subunits: a(1), b(2) and c(9-12). The alpha and beta chains form an alternating ring which encloses part of the gamma chain. CF(1) is attached to CF(0) by a central stalk formed by the gamma and epsilon chains, while a peripheral stalk is formed by the delta and b chains.

The protein localises to the cell inner membrane. Its function is as follows. Key component of the proton channel; it plays a direct role in the translocation of protons across the membrane. The sequence is that of ATP synthase subunit a from Sphingopyxis alaskensis (strain DSM 13593 / LMG 18877 / RB2256) (Sphingomonas alaskensis).